We begin with the raw amino-acid sequence, 610 residues long: METNVNPLAVILVYFDSKGDRLLYRYPYQTLGQTEVANDEQRKSRKRNPYAVANTDDLLQTPTHLGAAKSQGQLQGFADEVLSALFAVKPQLCNQKFELKLNDVRFVSHPTLIPQKEQRSGPMAKQQMLINIVFALHAQASYSIVKCYHELSKRLGLALKFEEQRSGYLTEQTAQMARTHDEQQQQPLERTLELIAERCSLAQALRSIFHDLCTTGLLSTSLNHNLTLCFCLPAKAHQLHKKGSMVDPETIDRCLRALKPYHGMLLLVDFAELLDCVPPTGARMLWQLVDVYDPLISLQSMSSNADLSIEHVYKLVSHLVYWAKATIIYPLCETNVYVIAPDAPLHTKSHLVEKFSARFAGMSLFEVISDFSLPTSIGHLTTPLQQPARQGILAQMVIWMLQHHLLMQLHTYVQFMPSEDEFGDSASCSNHLRDAISDEEGDQEPDADELHGSMLSMSSHPLPVPAVLVGGHRREASEDHSSLASDNIAVQPSSSHKSNFSITASMSTDNCDSLDSMEDEQKLKELLQVFSDADRAAIRRIPASANVDDLSLLVKLYQMGYFKSEHHLEEIMYFENLRRSQLLQLLDKFRDVLIIYETEDPAIASMYNTK.

Ser-437 carries the phosphoserine modification. The segment at 474 to 501 (REASEDHSSLASDNIAVQPSSSHKSNFS) is disordered. The span at 482-501 (SLASDNIAVQPSSSHKSNFS) shows a compositional bias: polar residues.

Belongs to the NPR3 family. As to quaternary structure, component of the GATOR complex consisting of mio, Nup44A/Seh1, Im11, Nplr3, Nplr2, Wdr24, Wdr59 and Sec13. Within the GATOR complex, probable component of the GATOR1 subcomplex which is likely composed of Iml1, Nplr2 and Nplr3. Interacts with Nprl2.

The protein resides in the cytoplasm. Its subcellular location is the lysosome. An essential component of the GATOR subcomplex GATOR1 which functions as an inhibitor of the amino acid-sensing branch of the TORC1 signaling pathway. The two GATOR subcomplexes, GATOR1 and GATOR2, regulate the TORC1 pathway in order to mediate metabolic homeostasis, female gametogenesis and the response to amino acid limitation and complete starvation. The function of GATOR1 in negatively regulating the TORC1 pathway is essential for maintaining baseline levels of TORC1 activity under nutrient rich conditions, and for promoting survival during amino acid or complete starvation by inhibiting TORC1-dependent cell growth and promoting catabolic metabolism and autophagy. In addition, this inhibition of TORC1 is necessary to maintain female fertility under normal conditions and during periods of nutrient stress. GATOR1 and GATOR2 act at different stages of oogenesis to regulate TORC1 in order to control meiotic entry and promote oocyte growth and development. After exactly four mitotic cyst divisions, the GATOR1 complex members (Iml1, Nprl2 and Nprl3) down-regulate TORC1 to slow cellular metabolism and promote the mitotic/meiotic transition. At later stages of oogenesis, the mio and Nup44A components of the GATOR2 complex inhibit GATOR1 and thus activate TORC1 to promote meiotic progression, and drive oocyte growth and development. The chain is GATOR complex protein NPRL3 from Drosophila melanogaster (Fruit fly).